Consider the following 188-residue polypeptide: Elongation factor P-like protein (188 aa).

This sequence belongs to the elongation factor P family.

This Xanthomonas euvesicatoria pv. vesicatoria (strain 85-10) (Xanthomonas campestris pv. vesicatoria) protein is Elongation factor P-like protein.